The sequence spans 181 residues: UPF0302 protein ABC1905 (181 aa).

Belongs to the UPF0302 family.

The sequence is that of UPF0302 protein ABC1905 from Shouchella clausii (strain KSM-K16) (Alkalihalobacillus clausii).